The chain runs to 392 residues: Alkaline phosphatase L (392 aa).

A signal peptide spans 1 to 23 (MYKRSLIAASLSVAALVSAQAMA).

This sequence belongs to the PstS family. As to quaternary structure, homodimer.

The protein resides in the secreted. It is found in the periplasm. It carries out the reaction a phosphate monoester + H2O = an alcohol + phosphate. Functionally, has both a phosphomonoesterase and phosphodiesterase activity. The polypeptide is Alkaline phosphatase L (Pseudomonas aeruginosa).